We begin with the raw amino-acid sequence, 259 residues long: Small ribosomal subunit protein uS2 (259 aa).

Belongs to the universal ribosomal protein uS2 family.

This is Small ribosomal subunit protein uS2 from Streptococcus pneumoniae serotype 2 (strain D39 / NCTC 7466).